The following is a 674-amino-acid chain: tRNA-guanine(15) transglycosylase (674 aa).

The Nucleophile role is filled by aspartate 90. The substrate site is built by aspartate 125 and alanine 192. Zn(2+) contacts are provided by cysteine 275, cysteine 277, and cysteine 280. The PUA domain occupies 596–671 (HNRVVVSEDS…QAIKTRKWKK (76 aa)).

Belongs to the archaeosine tRNA-ribosyltransferase family. It depends on Zn(2+) as a cofactor.

It catalyses the reaction guanosine(15) in tRNA + 7-cyano-7-deazaguanine = 7-cyano-7-carbaguanosine(15) in tRNA + guanine. It functions in the pathway tRNA modification; archaeosine-tRNA biosynthesis. Functionally, exchanges the guanine residue with 7-cyano-7-deazaguanine (preQ0) at position 15 in the dihydrouridine loop (D-loop) of archaeal tRNAs. The chain is tRNA-guanine(15) transglycosylase from Methanosphaera stadtmanae (strain ATCC 43021 / DSM 3091 / JCM 11832 / MCB-3).